The sequence spans 145 residues: Leghemoglobin-2 (145 aa).

A Globin domain is found at 3–145 (AFSDKQEGLV…ELAAAIKKAY (143 aa)). Tyr-26 and Tyr-31 each carry nitrated tyrosine. Ser-46 contacts heme b. Phosphoserine is present on Ser-46. Position 62 (His-62) interacts with O2. The heme b site is built by Lys-65, His-93, and Lys-96. Tyr-134 is subject to Nitrated tyrosine.

It belongs to the plant globin family. As to quaternary structure, monomer. Nitrated in effective nodules and particularly in hypoxic conditions; this mechanism may play a protective role in the symbiosis by buffering toxic peroxynitrite NO(2)(-). Nitration level decrease during nodule senescence. Post-translationally, phosphorylation at Ser-46 disrupts the molecular environment of its porphyrin ring oxygen binding pocket, thus leading to a reduced oxygen consumption and to the delivery of oxygen O(2) to symbiosomes. In terms of tissue distribution, root nodules.

The protein resides in the cytoplasm. The protein localises to the cytosol. It localises to the nucleus. In terms of biological role, leghemoglobin that reversibly binds oxygen O(2) through a pentacoordinated heme iron. In root nodules, facilitates the diffusion of oxygen to the bacteroids while preventing the bacterial nitrogenase from being inactivated by buffering dioxygen, nitric oxide and carbon monoxide, and promoting the formation of reactive oxygen species (ROS, e.g. H(2)O(2)). This role is essential for symbiotic nitrogen fixation (SNF). This Vigna unguiculata (Cowpea) protein is Leghemoglobin-2.